A 537-amino-acid polypeptide reads, in one-letter code: Syncytin-2 (537 aa).

Residues 1–15 (MGLLLLVLILTPLLA) form the signal peptide. Topologically, residues 16 to 478 (AYRHPDFPLL…GWLNWEGTWK (463 aa)) are extracellular. A CXXC motif is present at residues 43–46 (CWLC). 3 disulfide bridges follow: Cys-43–Cys-46, Cys-43–Cys-439, and Cys-431–Cys-438. 8 N-linked (GlcNAc...) asparagine glycosylation sites follow: Asn-133, Asn-146, Asn-177, Asn-220, Asn-241, Asn-247, Asn-312, and Asn-332. Positions 354 to 374 (FIPLLAGLGILAGTGTGIAGI) are fusion peptide. The CKS-17 motif lies at 414–430 (LQNRRGLDMLTAAQGGI). Residues 431-439 (CLALDEKCC) carry the CX6CC motif. An N-linked (GlcNAc...) asparagine glycan is attached at Asn-443. The chain crosses the membrane as a helical span at residues 479 to 499 (WFSWVLPFIGPLVSLLLLLLF). Over 500–537 (GPCLLNLITQFVSSRLQAIKLQTNGAGCRPRNIQESPF) the chain is Cytoplasmic.

It belongs to the gamma type-C retroviral envelope protein family. HERV class-I FRD env subfamily. The surface and transmembrane proteins form a heterodimer. They are attached by non-covalent interactions or by a labile interchain disulfide bond. Specific enzymatic cleavages in vivo yield the mature SU and TM proteins. In terms of processing, the CXXC motif is highly conserved across a broad range of retroviral envelope proteins. It is thought to participate in the formation of a labile disulfide bond possibly with the CX6CC motif present in the transmembrane protein.

The protein resides in the virion. It is found in the cell membrane. This endogenous retroviral envelope protein has retained its original fusogenic properties and participates in trophoblast fusion and the formation of a syncytium during placenta morphogenesis. The interaction with MFSD2A is apparently important for this process. Functionally, endogenous envelope proteins may have kept, lost or modified their original function during evolution but this one can still make pseudotypes with MLV, HIV-1 or SIV-1 virions and confer infectivity. Retroviral envelope proteins mediate receptor recognition and membrane fusion during early infection. The surface protein mediates receptor recognition, while the transmembrane protein anchors the envelope heterodimer to the viral membrane through one transmembrane domain. The other hydrophobic domain, called fusion peptide, mediates fusion of the viral membrane with the target cell membrane. The polypeptide is Syncytin-2 (ERVFRD-1) (Macaca fascicularis (Crab-eating macaque)).